Consider the following 361-residue polypeptide: 3-dehydroquinate synthase (361 aa).

Residues 70-75 (DGEQHK), 104-108 (GVVGD), 128-129 (TT), K141, and K150 each bind NAD(+). Residues E183, H246, and H263 each contribute to the Zn(2+) site.

Belongs to the sugar phosphate cyclases superfamily. Dehydroquinate synthase family. Co(2+) serves as cofactor. Zn(2+) is required as a cofactor. Requires NAD(+) as cofactor.

The protein resides in the cytoplasm. The enzyme catalyses 7-phospho-2-dehydro-3-deoxy-D-arabino-heptonate = 3-dehydroquinate + phosphate. It functions in the pathway metabolic intermediate biosynthesis; chorismate biosynthesis; chorismate from D-erythrose 4-phosphate and phosphoenolpyruvate: step 2/7. Functionally, catalyzes the conversion of 3-deoxy-D-arabino-heptulosonate 7-phosphate (DAHP) to dehydroquinate (DHQ). This Teredinibacter turnerae (strain ATCC 39867 / T7901) protein is 3-dehydroquinate synthase.